Consider the following 160-residue polypeptide: Endoribonuclease YbeY (160 aa).

Residues His111, His115, and His121 each coordinate Zn(2+).

It belongs to the endoribonuclease YbeY family. Zn(2+) is required as a cofactor.

It is found in the cytoplasm. Its function is as follows. Single strand-specific metallo-endoribonuclease involved in late-stage 70S ribosome quality control and in maturation of the 3' terminus of the 16S rRNA. The sequence is that of Endoribonuclease YbeY from Stutzerimonas stutzeri (strain A1501) (Pseudomonas stutzeri).